The primary structure comprises 344 residues: Ion-translocating oxidoreductase complex subunit D (344 aa).

The next 4 helical transmembrane spans lie at 23–43 (LVLGACVPGLLTLTWLYGPGT), 44–64 (LLNLAWASLVALACEAAMLAL), 77–99 (SALVTALLLAVALPPYAPWWLTL), and 120–140 (PFNPAMLGYVVALVSFPLEMT). FMN phosphoryl threonine is present on Thr-172. Transmembrane regions (helical) follow at residues 198 to 218 (LGSAGSEWVNLAFLLGGLFLL), 222 to 242 (LFTWHAPLGMLAGLFAMSLLF), 252 to 272 (GSPLFHLFSGATMLGAFFIVT), 285 to 305 (LVFGLGVGVLTYVIRAWGGYP), and 306 to 326 (DGVAFAVLLMNLAAPTIDYYT).

It belongs to the NqrB/RnfD family. In terms of assembly, the complex is composed of six subunits: RnfA, RnfB, RnfC, RnfD, RnfE and RnfG. It depends on FMN as a cofactor.

It localises to the cell inner membrane. Its function is as follows. Part of a membrane-bound complex that couples electron transfer with translocation of ions across the membrane. The polypeptide is Ion-translocating oxidoreductase complex subunit D (Pseudomonas aeruginosa (strain UCBPP-PA14)).